We begin with the raw amino-acid sequence, 291 residues long: ATP synthase gamma chain (291 aa).

It belongs to the ATPase gamma chain family. F-type ATPases have 2 components, CF(1) - the catalytic core - and CF(0) - the membrane proton channel. CF(1) has five subunits: alpha(3), beta(3), gamma(1), delta(1), epsilon(1). CF(0) has three main subunits: a, b and c.

Its subcellular location is the cell inner membrane. Functionally, produces ATP from ADP in the presence of a proton gradient across the membrane. The gamma chain is believed to be important in regulating ATPase activity and the flow of protons through the CF(0) complex. The polypeptide is ATP synthase gamma chain (Persephonella marina (strain DSM 14350 / EX-H1)).